A 352-amino-acid polypeptide reads, in one-letter code: Photosystem II D2 protein (352 aa).

T2 carries the N-acetylthreonine modification. Position 2 is a phosphothreonine (T2). A helical transmembrane segment spans residues 40–60; it reads CAYFALGGWLTGTTFVSSWYT. H117 contacts chlorophyll a. Residues 124 to 140 traverse the membrane as a helical segment; that stretch reads GFMLRQFEIARAVQIRP. Q129 and N142 together coordinate pheophytin a. Residues 152–165 form a helical membrane-spanning segment; that stretch reads VFVSVFLIYPLGQS. Residue H197 participates in chlorophyll a binding. The helical transmembrane segment at 207 to 227 threads the bilayer; it reads AALLCAIHGATVENTLFEDGD. A plastoquinone contacts are provided by H214 and F261. H214 provides a ligand contact to Fe cation. H268 contributes to the Fe cation binding site. A helical transmembrane segment spans residues 278–294; the sequence is GLWMSALGVVGLALNLR.

The protein belongs to the reaction center PufL/M/PsbA/D family. PSII is composed of 1 copy each of membrane proteins PsbA, PsbB, PsbC, PsbD, PsbE, PsbF, PsbH, PsbI, PsbJ, PsbK, PsbL, PsbM, PsbT, PsbX, PsbY, PsbZ, Psb30/Ycf12, at least 3 peripheral proteins of the oxygen-evolving complex and a large number of cofactors. It forms dimeric complexes. The D1/D2 heterodimer binds P680, chlorophylls that are the primary electron donor of PSII, and subsequent electron acceptors. It shares a non-heme iron and each subunit binds pheophytin, quinone, additional chlorophylls, carotenoids and lipids. There is also a Cl(-1) ion associated with D1 and D2, which is required for oxygen evolution. The PSII complex binds additional chlorophylls, carotenoids and specific lipids. is required as a cofactor.

The protein resides in the plastid. It localises to the chloroplast thylakoid membrane. It carries out the reaction 2 a plastoquinone + 4 hnu + 2 H2O = 2 a plastoquinol + O2. Functionally, photosystem II (PSII) is a light-driven water:plastoquinone oxidoreductase that uses light energy to abstract electrons from H(2)O, generating O(2) and a proton gradient subsequently used for ATP formation. It consists of a core antenna complex that captures photons, and an electron transfer chain that converts photonic excitation into a charge separation. The D1/D2 (PsbA/PsbD) reaction center heterodimer binds P680, the primary electron donor of PSII as well as several subsequent electron acceptors. D2 is needed for assembly of a stable PSII complex. This chain is Photosystem II D2 protein, found in Ostreococcus tauri.